A 600-amino-acid polypeptide reads, in one-letter code: Proline--tRNA ligase (600 aa).

This sequence belongs to the class-II aminoacyl-tRNA synthetase family. ProS type 1 subfamily. In terms of assembly, homodimer.

The protein localises to the cytoplasm. It carries out the reaction tRNA(Pro) + L-proline + ATP = L-prolyl-tRNA(Pro) + AMP + diphosphate. Its function is as follows. Catalyzes the attachment of proline to tRNA(Pro) in a two-step reaction: proline is first activated by ATP to form Pro-AMP and then transferred to the acceptor end of tRNA(Pro). As ProRS can inadvertently accommodate and process non-cognate amino acids such as alanine and cysteine, to avoid such errors it has two additional distinct editing activities against alanine. One activity is designated as 'pretransfer' editing and involves the tRNA(Pro)-independent hydrolysis of activated Ala-AMP. The other activity is designated 'posttransfer' editing and involves deacylation of mischarged Ala-tRNA(Pro). The misacylated Cys-tRNA(Pro) is not edited by ProRS. The sequence is that of Proline--tRNA ligase from Prochlorococcus marinus subsp. pastoris (strain CCMP1986 / NIES-2087 / MED4).